The chain runs to 126 residues: Small ribosomal subunit protein uS13 (126 aa).

Residues 95–126 are disordered; the sequence is NLPVHGQRTHTNARTRKGPRRAIAGKKKAGKK.

It belongs to the universal ribosomal protein uS13 family. In terms of assembly, part of the 30S ribosomal subunit. Forms a loose heterodimer with protein S19. Forms two bridges to the 50S subunit in the 70S ribosome.

Located at the top of the head of the 30S subunit, it contacts several helices of the 16S rRNA. In the 70S ribosome it contacts the 23S rRNA (bridge B1a) and protein L5 of the 50S subunit (bridge B1b), connecting the 2 subunits; these bridges are implicated in subunit movement. Contacts the tRNAs in the A and P-sites. The chain is Small ribosomal subunit protein uS13 from Frankia casuarinae (strain DSM 45818 / CECT 9043 / HFP020203 / CcI3).